Reading from the N-terminus, the 243-residue chain is 2-C-methyl-D-erythritol 4-phosphate cytidylyltransferase (243 aa).

The protein belongs to the IspD/TarI cytidylyltransferase family. IspD subfamily.

It catalyses the reaction 2-C-methyl-D-erythritol 4-phosphate + CTP + H(+) = 4-CDP-2-C-methyl-D-erythritol + diphosphate. It functions in the pathway isoprenoid biosynthesis; isopentenyl diphosphate biosynthesis via DXP pathway; isopentenyl diphosphate from 1-deoxy-D-xylulose 5-phosphate: step 2/6. Its function is as follows. Catalyzes the formation of 4-diphosphocytidyl-2-C-methyl-D-erythritol from CTP and 2-C-methyl-D-erythritol 4-phosphate (MEP). In Pelodictyon phaeoclathratiforme (strain DSM 5477 / BU-1), this protein is 2-C-methyl-D-erythritol 4-phosphate cytidylyltransferase.